A 103-amino-acid polypeptide reads, in one-letter code: Small ribosomal subunit protein uS10 (103 aa).

The protein belongs to the universal ribosomal protein uS10 family. Part of the 30S ribosomal subunit.

Involved in the binding of tRNA to the ribosomes. The chain is Small ribosomal subunit protein uS10 from Nitratiruptor sp. (strain SB155-2).